The sequence spans 396 residues: Cell adhesion molecule 3 (396 aa).

An N-terminal signal peptide occupies residues 1–22; the sequence is MGAPSALPLLLLLACSWAPGGA. Residues 23-124 form the Ig-like V-type domain; that stretch reads NLSQDDSQPW…VRTAKSLVTV (102 aa). Over 23 to 328 the chain is Extracellular; sequence NLSQDDSQPW…PVPSSSSTYH (306 aa). Disulfide bonds link Cys48–Cys108, Cys150–Cys207, and Cys252–Cys297. Ig-like C2-type domains lie at 128–226 and 231–313; these read PQKP…QRIE and PTAM…FTLN. Asn288 carries N-linked (GlcNAc...) asparagine glycosylation. Residues 329–349 form a helical membrane-spanning segment; sequence AIIGGIVAFIVFLLLILLIFL. The Cytoplasmic segment spans residues 350-396; that stretch reads GHYLIRHKGTYLTHEAKGSDDAPDADTAIINAEGGQSGGDDKKEYFI. The tract at residues 365–396 is disordered; sequence AKGSDDAPDADTAIINAEGGQSGGDDKKEYFI. Ser386 is modified (phosphoserine).

This sequence belongs to the nectin family. As to quaternary structure, homodimer. Can form trans-heterodimers with NECTIN3. Interacts with EPB41L1, DLG3, PALS2 and CASK. Mainly expressed in brain, in neuronal cell bodies of cerebellum, cortex, hippocampus, hypothalamus and spinal cord. In spinal cord predominantly expressed in motor neurons. Expressed in axons, presynaptic nerve terminals, glia cell processes.

It is found in the cell membrane. Its subcellular location is the cell junction. In terms of biological role, involved in cell-cell adhesion. Has both calcium-independent homophilic cell-cell adhesion activity and calcium-independent heterophilic cell-cell adhesion activity with IGSF4, NECTIN1 and NECTIN3. Interaction with EPB41L1 may regulate structure or function of cell-cell junctions. The sequence is that of Cell adhesion molecule 3 (Cadm3) from Mus musculus (Mouse).